We begin with the raw amino-acid sequence, 312 residues long: Olfactory receptor 2T8 (312 aa).

At 1–26 (MENGSYTSYFILLGLFNHTRAHQVLF) the chain is on the extracellular side. Residues N3 and N17 are each glycosylated (N-linked (GlcNAc...) asparagine). Residues 27 to 47 (MMVLSIVLTSLFGNSLMILLI) form a helical membrane-spanning segment. Residues 48-55 (HWDHRLHT) are Cytoplasmic-facing. Residues 56-76 (PMYFLLSQLSLMDVMLVSTTV) form a helical membrane-spanning segment. Residues 77–96 (PKMAADYLTGSKAISRAGCG) lie on the Extracellular side of the membrane. C95 and C177 are oxidised to a cystine. The helical transmembrane segment at 97–117 (AQIFFLPTLGGGECFLLAAMA) threads the bilayer. Over 118–143 (YDRYAAVCHPLRYPTLMSWQLCLRMN) the chain is Cytoplasmic. The helical transmembrane segment at 144 to 164 (LSCWLLGAADGLLQAVATLSF) threads the bilayer. The Extracellular portion of the chain corresponds to 165–201 (PYCGAHEIDHFFCETPVLVRLACADTSVFENAMYICC). The helical transmembrane segment at 202–222 (VLMLLVPFSLILSSYGLILAA) threads the bilayer. Over 223-234 (VLHMRSTEARKK) the chain is Cytoplasmic. A helical membrane pass occupies residues 235-255 (AFATCSSHVAVVGLFYGAAIF). The Extracellular segment spans residues 256 to 269 (TYMRPKSHRSTNHD). Residues 270-290 (KVVSAFYTMFTPLLNPLIYSV) traverse the membrane as a helical segment. The Cytoplasmic segment spans residues 291 to 312 (KNSEVKGALTRCMGRCVALSRE).

This sequence belongs to the G-protein coupled receptor 1 family.

It is found in the cell membrane. In terms of biological role, odorant receptor. The protein is Olfactory receptor 2T8 (OR2T8) of Homo sapiens (Human).